The following is a 274-amino-acid chain: Shikimate dehydrogenase (NADP(+)) (274 aa).

Residues 14–16 (SLS) and Thr-61 each bind shikimate. Lys-65 (proton acceptor) is an active-site residue. Positions 85 and 106 each coordinate shikimate. NADP(+) contacts are provided by residues 130-134 (GAGGA), 153-158 (NRTAER), and Ala-217. Tyr-219 is a shikimate binding site. Gly-240 provides a ligand contact to NADP(+).

The protein belongs to the shikimate dehydrogenase family. Homodimer.

It catalyses the reaction shikimate + NADP(+) = 3-dehydroshikimate + NADPH + H(+). The protein operates within metabolic intermediate biosynthesis; chorismate biosynthesis; chorismate from D-erythrose 4-phosphate and phosphoenolpyruvate: step 4/7. Involved in the biosynthesis of the chorismate, which leads to the biosynthesis of aromatic amino acids. Catalyzes the reversible NADPH linked reduction of 3-dehydroshikimate (DHSA) to yield shikimate (SA). This Halorubrum lacusprofundi (strain ATCC 49239 / DSM 5036 / JCM 8891 / ACAM 34) protein is Shikimate dehydrogenase (NADP(+)).